The chain runs to 66 residues: MPKLKTKSGAKKRFKITATGKVKHAQRGKRHGMIKRTKKQIRQLRGTRVLFKTDGDNIKKYFLPNA.

A disordered region spans residues 20 to 40 (GKVKHAQRGKRHGMIKRTKKQ).

Belongs to the bacterial ribosomal protein bL35 family.

This chain is Large ribosomal subunit protein bL35, found in Nitrobacter winogradskyi (strain ATCC 25391 / DSM 10237 / CIP 104748 / NCIMB 11846 / Nb-255).